The primary structure comprises 323 residues: Solute carrier family 35 member B1 (323 aa).

A run of 8 helical transmembrane segments spans residues 15-35, 51-71, 85-105, 136-156, 169-189, 205-225, 253-273, and 286-306; these read LVCFLGVFVCYFYYGILQETI, FALSLVFVQCIVNALFAKLLI, WLYAACSLSYLGAMVSSNSAL, YPLSKYLCVLLIVLGVALFMY, TFGYGELLLLLSLTLDGLTGV, MMLYINLWSSLFLGAGIVFTG, LGQTFIFMTVVYFGPLTCSII, and VILFSNPISSIQWVGTILVFL. Residues 319–323 carry the Di-lysine motif motif; it reads KKPSH.

This sequence belongs to the nucleotide-sugar transporter family. SLC35B subfamily.

It localises to the endoplasmic reticulum membrane. Functionally, probable sugar transporter. The protein is Solute carrier family 35 member B1 (slc35b1) of Xenopus tropicalis (Western clawed frog).